A 373-amino-acid chain; its full sequence is Arfaptin-1 (373 aa).

Residues 1–47 (MAQESPKNSAAEIPVTSNGEVDDSREHSFNRDLKHSLPSGLGLSETQ) form a disordered region. The residue at position 2 (alanine 2) is an N-acetylalanine. A phosphoserine mark is found at serine 5, serine 28, serine 36, serine 39, serine 69, serine 79, and serine 132. Residues 22 to 35 (DDSREHSFNRDLKH) are compositionally biased toward basic and acidic residues. Residues 153 to 353 (TVDLELEAQI…NQKQLEQTLK (201 aa)) enclose the AH domain. Threonine 361 is modified (phosphothreonine).

As to quaternary structure, forms homodimers or heterodimers with ARFIP2. Interacts with non-myristoylated GTP-bound ARF3, but not to GDP-bound ARF3. Interacts with ARF1. Binds with lower affinity to ARF5 and with very little affinity to ARF6. Interacts with ARL1. Interacts with ATG9A. In terms of processing, phosphorylated by PRKD1; phosphorylation delocalizes ARFIP1 from the Golgi and disrupts its ability to inhibit the activity of ADP-ribosylation factor, an important component of the vesicle scission machinery. In terms of tissue distribution, ubiquitously expressed. Higher levels in liver, pancreas, placenta, skeletal muscle and heart.

It is found in the golgi apparatus. The protein resides in the trans-Golgi network membrane. Plays a role in controlling biogenesis of secretory granules at the trans-Golgi network. Mechanistically, binds ARF-GTP at the neck of a growing secretory granule precursor and forms a protective scaffold. Once the granule precursor has been completely loaded, active PRKD1 phosphorylates ARFIP1 and releases it from ARFs. In turn, ARFs induce fission. Through this mechanism, ensures proper secretory granule formation at the Golgi of pancreatic beta cells. This is Arfaptin-1 from Homo sapiens (Human).